The chain runs to 1037 residues: Cysteine-rich motor neuron 1 protein (1037 aa).

A signal peptide spans 1–34 (MYLVAGGRGLAGCGHLSVSLLGLLLLLARSGTRA). The region spanning 35 to 112 (LVCLPCDESK…EYEVGVCEDE (78 aa)) is the IGFBP N-terminal domain. Residues 35-940 (LVCLPCDESK…HPGEDSSLDS (906 aa)) lie on the Extracellular side of the membrane. Cystine bridges form between Cys37–Cys60, Cys40–Cys62, Cys45–Cys63, Cys51–Cys66, Cys74–Cys90, and Cys84–Cys109. The short motif at 314–316 (RGD) is the Cell attachment site element. Asn330 carries an N-linked (GlcNAc...) asparagine glycan. VWFC domains lie at 334–391 (PACV…PVCE) and 401–457 (AGCY…PVCE). Antistasin-like domains are found at residues 469 to 498 (CGEL…TCQC), 505 to 532 (CLGL…LCQC), 539 to 564 (CRPT…ICRC), and 567 to 592 (CPEL…ICKC). VWFC domains follow at residues 606 to 663 (GTCL…PSCT), 677 to 735 (SICH…PQCT), 751 to 809 (SYCR…PYCL), and 817 to 874 (VVCH…PMCP). A helical transmembrane segment spans residues 941–961 (IVSVVVPIIICLSIIIAFLLI). At 962-1037 (NQKKQWVPLL…LQADNFYQTV (76 aa)) the chain is on the cytoplasmic side. At Thr1036 the chain carries Phosphothreonine.

In terms of assembly, interacts with BMP4 and BMP7. Expressed during embryonic development in brain, kidney, spinal cord, testis, lens, vibrissae, pinna, tooth primordia and in specific regions of the CNS. Expressed in adult lens. Displays male-specific expression in the fetal gonads with the strongest expression in the Sertoli cells of developing testis.

Its subcellular location is the membrane. May play a role in CNS development by interacting with growth factors implicated in motor neuron differentiation and survival. May play a role in capillary formation and maintenance during angiogenesis. Modulates BMP activity by affecting its processing and delivery to the cell surface. The chain is Cysteine-rich motor neuron 1 protein (Crim1) from Mus musculus (Mouse).